We begin with the raw amino-acid sequence, 1454 residues long: Probable cleavage and polyadenylation specificity factor subunit 1 (1454 aa).

The tract at residues 810–843 is disordered; the sequence is EEKEKKAKQTAAQEKEKETEKKKDDAKNEEDQVN. Residues 812–843 show a composition bias toward basic and acidic residues; the sequence is KEKKAKQTAAQEKEKETEKKKDDAKNEEDQVN.

Belongs to the CPSF1 family. In terms of assembly, CPSF is a heterotetramer composed of four distinct subunits 160 (cpsf-1), 100 (cpsf-2), 70 (cpsf-3), and 30 kDa (cpsf-4).

It is found in the nucleus. In terms of biological role, CPSF plays a key role in pre-mRNA 3'-end formation, recognizing the AAUAAA signal sequence and interacting with poly(A)polymerase and other factors to bring about cleavage and poly(A) addition. This subunit is involved in the RNA recognition step of the polyadenylation reaction. This chain is Probable cleavage and polyadenylation specificity factor subunit 1, found in Caenorhabditis briggsae.